Reading from the N-terminus, the 568-residue chain is Zinc finger protein 583 (568 aa).

Residues 6–77 enclose the KRAB domain; that stretch reads LTFEDVSVNF…QKKGARDTCP (72 aa). C2H2-type zinc fingers lie at residues 211 to 233, 239 to 261, 267 to 289, 295 to 317, 323 to 345, 351 to 373, 379 to 401, 407 to 429, 435 to 457, 463 to 485, 491 to 513, and 519 to 541; these read LKCS…QRIH, YACV…KRIH, YECK…QRVH, YQCK…QRIH, FECI…QRIH, YVCH…QRIH, YECA…QRSH, YICK…QRIH, YECN…QRIH, and YECK…EKVH.

This sequence belongs to the krueppel C2H2-type zinc-finger protein family.

Its subcellular location is the nucleus. Its function is as follows. May be involved in transcriptional regulation. This Mus musculus (Mouse) protein is Zinc finger protein 583 (Znf583).